A 305-amino-acid polypeptide reads, in one-letter code: tRNA-cytidine(32) 2-sulfurtransferase (305 aa).

The tract at residues 1-20 (MTAVLPLPHPLADPAPRDPR) is disordered. A PP-loop motif motif is present at residues 59-64 (SGGKDS). Positions 134, 137, and 225 each coordinate [4Fe-4S] cluster. The segment covering 282–293 (DAPPDLAPDPGA) has biased composition (low complexity). Residues 282 to 305 (DAPPDLAPDPGAWLTASDATHDSD) form a disordered region.

It belongs to the TtcA family. Homodimer. Mg(2+) serves as cofactor. The cofactor is [4Fe-4S] cluster.

Its subcellular location is the cytoplasm. It catalyses the reaction cytidine(32) in tRNA + S-sulfanyl-L-cysteinyl-[cysteine desulfurase] + AH2 + ATP = 2-thiocytidine(32) in tRNA + L-cysteinyl-[cysteine desulfurase] + A + AMP + diphosphate + H(+). Its pathway is tRNA modification. Catalyzes the ATP-dependent 2-thiolation of cytidine in position 32 of tRNA, to form 2-thiocytidine (s(2)C32). The sulfur atoms are provided by the cysteine/cysteine desulfurase (IscS) system. The polypeptide is tRNA-cytidine(32) 2-sulfurtransferase (Xanthomonas oryzae pv. oryzae (strain MAFF 311018)).